The primary structure comprises 140 residues: ATP synthase epsilon chain (140 aa).

The protein belongs to the ATPase epsilon chain family. In terms of assembly, F-type ATPases have 2 components, CF(1) - the catalytic core - and CF(0) - the membrane proton channel. CF(1) has five subunits: alpha(3), beta(3), gamma(1), delta(1), epsilon(1). CF(0) has three main subunits: a, b and c.

It is found in the cell inner membrane. In terms of biological role, produces ATP from ADP in the presence of a proton gradient across the membrane. This chain is ATP synthase epsilon chain, found in Neisseria meningitidis serogroup C / serotype 2a (strain ATCC 700532 / DSM 15464 / FAM18).